Here is a 512-residue protein sequence, read N- to C-terminus: Glutathione-binding protein GsiB (512 aa).

The first 26 residues, 1–26 (MARAVHRSGLVALGIATALMASCAFA), serve as a signal peptide directing secretion.

The protein belongs to the bacterial solute-binding protein 5 family. As to quaternary structure, the complex is composed of two ATP-binding proteins (GsiA), two transmembrane proteins (GsiC and GsiD) and a solute-binding protein (GsiB).

Its subcellular location is the periplasm. In terms of biological role, part of the ABC transporter complex GsiABCD involved in glutathione import. Binds glutathione. This chain is Glutathione-binding protein GsiB, found in Escherichia coli O6:K15:H31 (strain 536 / UPEC).